The following is a 349-amino-acid chain: Magnesium-protoporphyrin IX monomethyl ester [oxidative] cyclase (349 aa).

Belongs to the AcsF family. The cofactor is Fe cation.

It is found in the plastid. The protein resides in the chloroplast. The catalysed reaction is Mg-protoporphyrin IX 13-monomethyl ester + 3 NADPH + 3 O2 + 2 H(+) = 3,8-divinyl protochlorophyllide a + 3 NADP(+) + 5 H2O. It participates in porphyrin-containing compound metabolism; chlorophyll biosynthesis (light-independent). Its function is as follows. Catalyzes the formation of the isocyclic ring in chlorophyll biosynthesis. Mediates the cyclase reaction, which results in the formation of divinylprotochlorophyllide (Pchlide) characteristic of all chlorophylls from magnesium-protoporphyrin IX 13-monomethyl ester (MgPMME). This Porphyra purpurea (Red seaweed) protein is Magnesium-protoporphyrin IX monomethyl ester [oxidative] cyclase.